The following is a 74-amino-acid chain: Exodeoxyribonuclease 7 small subunit (74 aa).

The protein belongs to the XseB family. As to quaternary structure, heterooligomer composed of large and small subunits.

The protein resides in the cytoplasm. The enzyme catalyses Exonucleolytic cleavage in either 5'- to 3'- or 3'- to 5'-direction to yield nucleoside 5'-phosphates.. Bidirectionally degrades single-stranded DNA into large acid-insoluble oligonucleotides, which are then degraded further into small acid-soluble oligonucleotides. In Thermotoga neapolitana (strain ATCC 49049 / DSM 4359 / NBRC 107923 / NS-E), this protein is Exodeoxyribonuclease 7 small subunit.